The following is a 305-amino-acid chain: Ribosomal RNA small subunit methyltransferase H (305 aa).

Residues 47–49 (GGH), Asp-66, Phe-93, Asp-108, and Gln-115 each bind S-adenosyl-L-methionine.

Belongs to the methyltransferase superfamily. RsmH family.

The protein localises to the cytoplasm. The enzyme catalyses cytidine(1402) in 16S rRNA + S-adenosyl-L-methionine = N(4)-methylcytidine(1402) in 16S rRNA + S-adenosyl-L-homocysteine + H(+). In terms of biological role, specifically methylates the N4 position of cytidine in position 1402 (C1402) of 16S rRNA. The chain is Ribosomal RNA small subunit methyltransferase H from Prochlorococcus marinus (strain MIT 9211).